Consider the following 175-residue polypeptide: Inorganic pyrophosphatase (175 aa).

Residues K30, R44, and Y56 each contribute to the substrate site. Mg(2+) is bound by residues D66, D71, and D103. Y142 provides a ligand contact to substrate.

Belongs to the PPase family. Homohexamer. Mg(2+) is required as a cofactor.

The protein localises to the cytoplasm. The catalysed reaction is diphosphate + H2O = 2 phosphate + H(+). Catalyzes the hydrolysis of inorganic pyrophosphate (PPi) forming two phosphate ions. The polypeptide is Inorganic pyrophosphatase (Yersinia pestis).